The chain runs to 98 residues: MPSTYINILLAFTMALLGLLLYRSHMMSSLLCLEGLMLALFILSTLMALNTHHTLSAVLPIVLMVFAACEAALGLALLVMVSNTYGLDYVQNLNLLQC.

3 helical membrane passes run 1–21, 29–49, and 61–81; these read MPST…GLLL, SLLC…LMAL, and IVLM…LVMV.

It belongs to the complex I subunit 4L family. As to quaternary structure, core subunit of respiratory chain NADH dehydrogenase (Complex I) which is composed of 45 different subunits.

The protein resides in the mitochondrion inner membrane. It carries out the reaction a ubiquinone + NADH + 5 H(+)(in) = a ubiquinol + NAD(+) + 4 H(+)(out). In terms of biological role, core subunit of the mitochondrial membrane respiratory chain NADH dehydrogenase (Complex I) which catalyzes electron transfer from NADH through the respiratory chain, using ubiquinone as an electron acceptor. Part of the enzyme membrane arm which is embedded in the lipid bilayer and involved in proton translocation. This Choloepus didactylus (Southern two-toed sloth) protein is NADH-ubiquinone oxidoreductase chain 4L (MT-ND4L).